A 422-amino-acid polypeptide reads, in one-letter code: Exopolygalacturonase clone GBGE184 (422 aa).

The signal sequence occupies residues 1-31 (MANARSLVAKANNINVGSLILMALVFGSCVA). 5 PbH1 repeats span residues 200–226 (TENV…HLSN), 227–248 (ADNV…SVGR), 250–270 (SNNV…SVGS), 280–301 (VSGI…RIKT), and 310–331 (AVDI…IIDQ). N-linked (GlcNAc...) asparagine glycosylation occurs at asparagine 229. The Proton donor role is filled by aspartate 241. Cysteine 243 and cysteine 260 are disulfide-bonded. N-linked (GlcNAc...) asparagine glycosylation occurs at asparagine 252. The active site involves histidine 264. N-linked (GlcNAc...) asparagine glycosylation is present at asparagine 287. Cystine bridges form between cysteine 366–cysteine 372 and cysteine 404–cysteine 420.

Belongs to the glycosyl hydrolase 28 family.

It is found in the secreted. The protein resides in the cell wall. It catalyses the reaction [(1-&gt;4)-alpha-D-galacturonosyl](n) + H2O = alpha-D-galacturonate + [(1-&gt;4)-alpha-D-galacturonosyl](n-1). Functionally, may function in depolymerizing pectin during pollen development, germination, and tube growth. Acts as an exo-polygalacturonase. The polypeptide is Exopolygalacturonase clone GBGE184 (PGA3) (Arabidopsis thaliana (Mouse-ear cress)).